A 265-amino-acid chain; its full sequence is Probable ribose-5-phosphate isomerase 2 (265 aa).

N-acetylalanine is present on A2. A Phosphoserine modification is found at S96.

This sequence belongs to the ribose 5-phosphate isomerase family.

Its subcellular location is the cytoplasm. The catalysed reaction is aldehydo-D-ribose 5-phosphate = D-ribulose 5-phosphate. It participates in carbohydrate degradation; pentose phosphate pathway; D-ribose 5-phosphate from D-ribulose 5-phosphate (non-oxidative stage): step 1/1. Functionally, catalyzes the reversible conversion of ribose-5-phosphate to ribulose 5-phosphate. This chain is Probable ribose-5-phosphate isomerase 2 (RPI2), found in Arabidopsis thaliana (Mouse-ear cress).